The following is a 4691-amino-acid chain: Plectin (4691 aa).

The globular 1 stretch occupies residues 1–1478 (MVAGMLMPLD…SELTTLTSQY (1478 aa)). R21 carries the post-translational modification Phosphoserine. Position 26 is a phosphotyrosine (V26). 2 disordered regions span residues 113 to 161 (RSPH…TPVV) and 167 to 186 (GTLA…RDRV). Over residues 137–154 (DPAREERQVYRRKEREEG) the composition is skewed to basic and acidic residues. The tract at residues 181 to 411 (DERDRVQKKT…YVSSLYDAMP (231 aa)) is actin-binding. 2 consecutive Calponin-homology (CH) domains span residues 185-293 (RVQK…LHFQ) and 306-411 (MTAK…DAMP). The Spectrin 1 repeat unit spans residues 653 to 727 (LQSTQRRPEL…ERARNDESQL (75 aa)). S728 bears the Phosphoserine mark. 2 Spectrin repeats span residues 748–832 (KLLN…REDH) and 845–938 (LQTQ…AIVQ). At T823 the chain carries Phosphothreonine. Residues 949 to 1006 (RGHVPLIAVCDYKQVEVTVHKGDQCQLVGPAQPSHWKVLSGSSSEAAVPSVCFLVPPP) enclose the SH3 domain. The required for interaction with intermediate filament proteins stretch occupies residues 963–4572 (VEVTVHKGDQ…ARTAQKLRDV (3610 aa)). S1055 bears the Phosphoserine mark. The Spectrin 4 repeat unit spans residues 1323 to 1423 (RERVTQLLER…QKFAKQYINA (101 aa)). The residue at position 1443 (S1443) is a Phosphoserine. Coiled-coil stretches lie at residues 1477-1697 (QYIK…ERRL) and 1729-2764 (SFAE…TTQA). The interval 1479 to 2762 (IKFISETLRR…ALAHSEIATT (1284 aa)) is central fibrous rod domain. The interval 1626 to 1653 (RAEEAEAQKRQAQEEAERLRRQVQDESQ) is disordered. S1729 carries the post-translational modification Phosphoserine. K1733 is modified (N6-acetyllysine). Disordered stretches follow at residues 1801–1835 (SLAQ…RELA), 2100–2141 (AEDT…SLAA), and 2223–2317 (RLRS…KHKK). Basic and acidic residues-rich tracts occupy residues 1806-1835 (DAEK…RELA), 2100-2116 (AEDT…EAAR), 2124-2136 (EEQR…ERVQ), and 2223-2266 (RLRS…KQSA). Residues 2267-2280 (EEQAQAQAQAQAAA) show a composition bias toward low complexity. Residues 2281–2296 (EKLRKEAEQEAARRAQ) are compositionally biased toward basic and acidic residues. At S2639 the chain carries Phosphoserine. The residue at position 2644 (K2644) is an N6-acetyllysine. The interval 2675–2728 (LREEQQRQQQQMEQEKQELMASMEEARRRQREAEEGVRRKQEELQHLEQQRQQQ) is disordered. Residues 2687 to 2728 (EQEKQELMASMEEARRRQREAEEGVRRKQEELQHLEQQRQQQ) show a composition bias toward basic and acidic residues. The interval 2763 to 4691 (QAASTKALPN…SLGGPESAVA (1929 aa)) is globular 2. S2781 is modified (phosphoserine). Y2788 bears the Phosphotyrosine mark. Plectin repeat units follow at residues 2795–2832 (QKVP…REDV), 2833–2870 (YRYL…PGTA), 2871–2908 (LILL…PELH), 2909–2946 (HKLL…RDHG), 2947–2984 (VRLL…EEMN), and 2988–3022 (SDPS…PETG). Phosphoserine is present on S2809. T2893 carries the phosphothreonine modification. A Phosphotyrosine modification is found at Y3040. 2 positions are modified to N6-acetyllysine: K3060 and K3098. Plectin repeat units lie at residues 3123-3160 (ALVP…ADSV), 3161-3198 (RQAL…PEVA), 3199-3236 (VALL…PELH), 3237-3274 (EKLL…REQG), 3275-3312 (LRLL…KETN), and 3315-3350 (LTSP…QLTG). Basic and acidic residues predominate over residues 3312–3326 (NRALTSPRDDARVYH). The disordered stretch occupies residues 3312–3338 (NRALTSPRDDARVYHDPSTQEPVTYSQ). Residues 3328–3338 (PSTQEPVTYSQ) show a composition bias toward polar residues. Y3369 carries the post-translational modification Phosphotyrosine. N6-acetyllysine is present on K3427. Plectin repeat units follow at residues 3492 to 3529 (RTLL…PSTA), 3530 to 3567 (TLLL…PELH), 3568 to 3605 (EKLL…RDHA), 3606 to 3643 (IRLL…EEMN), and 3647 to 3681 (ADPS…PETG). At T3792 the chain carries Phosphothreonine. A Phosphotyrosine modification is found at Y3797. 5 Plectin repeats span residues 3827-3864 (WRYL…AEVA), 3865-3902 (RLLL…PELH), 3903-3940 (DRLL…AEEA), 3941-3978 (LRLL…KDTH), and 3982-4015 (SEPS…DPSG). Positions 3954–4291 (VDPRLGFHLP…KRRVVIVDPE (338 aa)) are required for interaction with type2 keratins, DES and VIM. Phosphothreonine is present on T4037. A Phosphoserine modification is found at S4061. Plectin repeat units follow at residues 4070 to 4107 (QKFL…PGTA), 4108 to 4145 (FELL…PEFK), 4146 to 4183 (DKLL…KDHG), 4184 to 4221 (IRLL…EEMN), 4225 to 4259 (TDPS…PQTG), and 4272 to 4312 (RKTS…HQTY). A binding to intermediate filaments region spans residues 4257–4307 (QTGLCLLPLKEKKRERKTSSKSSVRKRRVVIVDPETGKEMSVYEAYRKGLI). The disordered stretch occupies residues 4387–4420 (FRSRSSSVGSSSSYPISSAGPRTQLASWSDPTEE). Phosphoserine occurs at positions 4389, 4391, 4392, 4393, 4396, 4397, 4398, and 4399. Residues 4389-4404 (SRSSSVGSSSSYPISS) show a composition bias toward low complexity. Y4400 carries the phosphotyrosine modification. 2 positions are modified to phosphoserine: S4403 and S4413. Over residues 4406-4416 (GPRTQLASWSD) the composition is skewed to polar residues. Plectin repeat units lie at residues 4415–4452 (SDPT…NITG), 4453–4490 (QRLL…KIMV), 4491–4528 (DRIN…YEAG), 4529–4566 (QRFL…ARTA), and 4567–4604 (QKLR…EGTG). A Phosphothreonine modification is found at T4418. The required for efficient interaction with KRT5 and KRT14 heterodimers stretch occupies residues 4503–4572 (FEDPRTKTKM…ARTAQKLRDV (70 aa)). T4546 carries the post-translational modification Phosphothreonine; by CDK1. A phosphoserine mark is found at S4614 and S4620. A compositionally biased stretch (low complexity) spans 4618 to 4678 (YYSPYSVSGS…SGYGRRYASG (61 aa)). A disordered region spans residues 4618-4691 (YYSPYSVSGS…SLGGPESAVA (74 aa)). Y4622 bears the Phosphotyrosine mark. S4623, S4625, and S4629 each carry phosphoserine. The residue at position 4630 (T4630) is a Phosphothreonine. A 4 X 4 AA tandem repeats of G-S-R-X region spans residues 4632-4647 (GSRTGSRTGSRAGSRR). Position 4633 is a phosphoserine (S4633). R4634 and R4647 each carry omega-N-methylarginine. Residues S4649 and S4682 each carry the phosphoserine modification.

This sequence belongs to the plakin or cytolinker family. In terms of assembly, homodimer or homotetramer. Interacts (via actin-binding domain) with SYNE3. Interacts (via calponin-homology (CH) 1 domain) with VIM (via rod region). Interacts (via N-terminus) with DST isoform 2 (via N-terminus). Interacts with FER. Interacts with TOR1A. Interacts with ANK3. Identified in complexes that contain VIM, EZR, AHNAK, BFSP1, BFSP2, ANK2, PLEC, PRX and spectrin. As to quaternary structure, interacts with KRT14, heterodimers consisting of KRT8 and KRT18, heterodimers consisting of KRT5 and KRT14, heterodimers consisting of KRT14 and KRT15, and heterodimers consisting of KRT1 and KRT10. Interacts with DES and VIM. Phosphorylated by CDK1; regulates dissociation from intermediate filaments during mitosis. Isoform PLEC-1A is phosphorylated on Ser-21. Isoform PLEC-1A is phosphorylated on Tyr-26. In terms of tissue distribution, detected in eye lens fiber cells (at protein level). Expressed at high levels in lung, brain, small intestine, muscle, heart and skin with lower levels found in kidney, liver, uterus, spleen and salivary gland.

It is found in the cytoplasm. It localises to the cytoskeleton. The protein resides in the cell junction. Its subcellular location is the hemidesmosome. The protein localises to the cell projection. It is found in the podosome. Its function is as follows. Interlinks intermediate filaments with microtubules and microfilaments and anchors intermediate filaments to desmosomes or hemidesmosomes. May be involved not only in the cross-linking and stabilization of cytoskeletal intermediate filaments network, but also in the regulation of their dynamics. The protein is Plectin (Plec) of Mus musculus (Mouse).